The primary structure comprises 240 residues: MKAATDQELRKLIVLYNNVMEVMEHDAAKSMRDDNRAYGGFVRAAKGKIQELITERLVRTVWDVEMGENPERLSINSKKIKIPILRSYVDSINDENLKKYISSNILKYSYGLSVDKHVFIDNKFVLGIECKAYTENAMLKRILVDFYLLKTKFPKLNCFLFQLESQLGGDYSECNKFPIGSYPTRTIMSYFKNVDLNIVTLLEGERKVDRPINKPQFFKPLKVEHLEVAIGYLQESLSEI.

It catalyses the reaction Endonucleolytic cleavage of DNA to give specific double-stranded fragments with terminal 5'-phosphates.. A P subtype restriction enzyme that recognizes the double-stranded sequence 5'-CTNAG-3' and cleaves after C-1. In Desulfomicrobium norvegicum (strain DSM 1741 / NCIMB 8310) (Desulfovibrio baculatus (strain Norway 4)), this protein is Type II restriction enzyme DdeI (ddeIR).